We begin with the raw amino-acid sequence, 106 residues long: Large ribosomal subunit protein bL31B (106 aa).

A disordered region spans residues 85–106 (PVQVAEEPVAKGKKKPSLKKKK). Positions 95 to 106 (KGKKKPSLKKKK) are enriched in basic residues.

It belongs to the bacterial ribosomal protein bL31 family. Type B subfamily. In terms of assembly, part of the 50S ribosomal subunit.

The protein is Large ribosomal subunit protein bL31B of Chlamydia felis (strain Fe/C-56) (Chlamydophila felis).